The primary structure comprises 304 residues: Sulfate adenylyltransferase subunit 2 (304 aa).

Belongs to the PAPS reductase family. CysD subfamily. Heterodimer composed of CysD, the smaller subunit, and CysN.

The catalysed reaction is sulfate + ATP + H(+) = adenosine 5'-phosphosulfate + diphosphate. Its pathway is sulfur metabolism; hydrogen sulfide biosynthesis; sulfite from sulfate: step 1/3. In terms of biological role, with CysN forms the ATP sulfurylase (ATPS) that catalyzes the adenylation of sulfate producing adenosine 5'-phosphosulfate (APS) and diphosphate, the first enzymatic step in sulfur assimilation pathway. APS synthesis involves the formation of a high-energy phosphoric-sulfuric acid anhydride bond driven by GTP hydrolysis by CysN coupled to ATP hydrolysis by CysD. The polypeptide is Sulfate adenylyltransferase subunit 2 (Halorhodospira halophila (strain DSM 244 / SL1) (Ectothiorhodospira halophila (strain DSM 244 / SL1))).